A 606-amino-acid polypeptide reads, in one-letter code: Membrane protein insertase YidC (606 aa).

A helical membrane pass occupies residues 8 to 28 (LILATALSFLVILVWFLLFPP). Low complexity predominate over residues 59 to 78 (TEAAPGAAPQTAATPTENAP). The tract at residues 59-79 (TEAAPGAAPQTAATPTENAPR) is disordered. The next 4 helical transmembrane spans lie at 378–398 (MGVA…PLAW), 448–468 (LPIL…FVTI), 506–526 (SILA…SMWL), and 542–562 (IFAW…SGLI).

Belongs to the OXA1/ALB3/YidC family. Type 1 subfamily. As to quaternary structure, interacts with the Sec translocase complex via SecD. Specifically interacts with transmembrane segments of nascent integral membrane proteins during membrane integration.

It is found in the cell inner membrane. In terms of biological role, required for the insertion and/or proper folding and/or complex formation of integral membrane proteins into the membrane. Involved in integration of membrane proteins that insert both dependently and independently of the Sec translocase complex, as well as at least some lipoproteins. Aids folding of multispanning membrane proteins. The chain is Membrane protein insertase YidC from Dinoroseobacter shibae (strain DSM 16493 / NCIMB 14021 / DFL 12).